Reading from the N-terminus, the 345-residue chain is Phosphoribosylformylglycinamidine cyclo-ligase (345 aa).

It belongs to the AIR synthase family.

It localises to the cytoplasm. The catalysed reaction is 2-formamido-N(1)-(5-O-phospho-beta-D-ribosyl)acetamidine + ATP = 5-amino-1-(5-phospho-beta-D-ribosyl)imidazole + ADP + phosphate + H(+). It functions in the pathway purine metabolism; IMP biosynthesis via de novo pathway; 5-amino-1-(5-phospho-D-ribosyl)imidazole from N(2)-formyl-N(1)-(5-phospho-D-ribosyl)glycinamide: step 2/2. The polypeptide is Phosphoribosylformylglycinamidine cyclo-ligase (Shewanella putrefaciens (strain CN-32 / ATCC BAA-453)).